A 249-amino-acid polypeptide reads, in one-letter code: 5'-nucleotidase SurE (249 aa).

4 residues coordinate a divalent metal cation: D8, D9, S39, and N91.

This sequence belongs to the SurE nucleotidase family. It depends on a divalent metal cation as a cofactor.

It localises to the cytoplasm. The catalysed reaction is a ribonucleoside 5'-phosphate + H2O = a ribonucleoside + phosphate. Nucleotidase that shows phosphatase activity on nucleoside 5'-monophosphates. The protein is 5'-nucleotidase SurE of Pseudomonas aeruginosa (strain UCBPP-PA14).